The primary structure comprises 427 residues: Chitin disaccharide deacetylase (427 aa).

Residues M1 to A22 form the signal peptide. Residues G28–D326 form the NodB homology domain. 2 consecutive Chitin-binding type-3 domains span residues P333–W375 and T382–S419.

This sequence belongs to the polysaccharide deacetylase family. Carbohydrate-binding module 12 subfamily.

The enzyme catalyses N,N'-diacetylchitobiose + H2O = N-acetyl-beta-D-glucosaminyl-(1-&gt;4)-D-glucosamine + acetate. The protein operates within glycan degradation; chitin degradation. Specifically catalyzes the degradation of N,N'-diacetylchitobiose. Key enzyme in the chitin catabolic cascade. The sequence is that of Chitin disaccharide deacetylase (deaA) from Vibrio alginolyticus.